Reading from the N-terminus, the 503-residue chain is Glucosaminyl-phosphatidylinositol-acyltransferase PIGW (503 aa).

The Lumenal segment spans residues methionine 1–glutamate 21. An N-linked (GlcNAc...) asparagine glycan is attached at asparagine 13. A helical transmembrane segment spans residues valine 22–phenylalanine 42. Residues serine 43–serine 48 lie on the Cytoplasmic side of the membrane. A helical transmembrane segment spans residues phenylalanine 49–threonine 71. Residues leucine 72–valine 74 are Lumenal-facing. Residues leucine 75–isoleucine 97 traverse the membrane as a helical segment. At tyrosine 98–cysteine 131 the chain is on the cytoplasmic side. A helical transmembrane segment spans residues tyrosine 132–phenylalanine 152. The Lumenal portion of the chain corresponds to proline 153 to glutamate 160. A helical transmembrane segment spans residues leucine 161–valine 181. The Cytoplasmic portion of the chain corresponds to cysteine 182–serine 201. Residues leucine 202 to isoleucine 222 form a helical membrane-spanning segment. Residues glycine 223 to asparagine 236 are Lumenal-facing. A helical transmembrane segment spans residues phenylalanine 237 to leucine 257. The Cytoplasmic segment spans residues asparagine 258 to lysine 259. Residues serine 260–leucine 280 traverse the membrane as a helical segment. The Lumenal portion of the chain corresponds to lysine 281 to glycine 304. A helical membrane pass occupies residues isoleucine 305–valine 325. The Cytoplasmic segment spans residues leucine 326–threonine 339. The helical transmembrane segment at cysteine 340–isoleucine 360 threads the bilayer. Topologically, residues glutamate 361 to serine 380 are lumenal. Residues leucine 381–isoleucine 401 traverse the membrane as a helical segment. At lysine 402–glutamine 447 the chain is on the cytoplasmic side. A Phosphoserine modification is found at serine 415. Residues leucine 448–leucine 468 traverse the membrane as a helical segment. Topologically, residues histidine 469–alanine 472 are lumenal. A helical membrane pass occupies residues leucine 473–leucine 493. Residues aspartate 494–tryptophan 503 are Cytoplasmic-facing.

It belongs to the PIGW family.

The protein resides in the endoplasmic reticulum membrane. The protein operates within glycolipid biosynthesis; glycosylphosphatidylinositol-anchor biosynthesis. Functionally, acyltransferase that catalyzes the acyl transfer from an acyl-CoA at the 2-OH position of the inositol ring of glucosaminyl phosphatidylinositol (GlcN-PI) to generate GlcN-(acyl)PI and participates in the fourth step of GPI-anchor biosynthesi. Required for the transport of GPI-anchored proteins to the plasma membrane. Acetylation during GPI-anchor biosynthesis is not essential for the subsequent mannosylation and is usually removed soon after the attachment of GPIs to proteins. This Mus musculus (Mouse) protein is Glucosaminyl-phosphatidylinositol-acyltransferase PIGW.